The chain runs to 314 residues: Acetyl-coenzyme A carboxylase carboxyl transferase subunit alpha (314 aa).

The 258-residue stretch at 32 to 289 (EIDMLEASLE…KSAFVEQLDS (258 aa)) folds into the CoA carboxyltransferase C-terminal domain.

The protein belongs to the AccA family. Acetyl-CoA carboxylase is a heterohexamer composed of biotin carboxyl carrier protein (AccB), biotin carboxylase (AccC) and two subunits each of ACCase subunit alpha (AccA) and ACCase subunit beta (AccD).

It is found in the cytoplasm. It catalyses the reaction N(6)-carboxybiotinyl-L-lysyl-[protein] + acetyl-CoA = N(6)-biotinyl-L-lysyl-[protein] + malonyl-CoA. The protein operates within lipid metabolism; malonyl-CoA biosynthesis; malonyl-CoA from acetyl-CoA: step 1/1. Component of the acetyl coenzyme A carboxylase (ACC) complex. First, biotin carboxylase catalyzes the carboxylation of biotin on its carrier protein (BCCP) and then the CO(2) group is transferred by the carboxyltransferase to acetyl-CoA to form malonyl-CoA. The polypeptide is Acetyl-coenzyme A carboxylase carboxyl transferase subunit alpha (Staphylococcus aureus (strain bovine RF122 / ET3-1)).